The primary structure comprises 346 residues: CLOCK-interacting pacemaker (346 aa).

Residues 1–42 (MEKNQKCATEQERFKARSGHGDGQRAEPRKTQTTTESDKDSG) show a composition bias toward basic and acidic residues. 2 disordered regions span residues 1–83 (MEKN…SQPQ) and 167–228 (CARK…KELD). The span at 50–68 (CLSSVEQTDTEEGPTTSRW) shows a compositional bias: polar residues. Over residues 179 to 192 (NQTKRQCSKGHSGS) the composition is skewed to basic residues. Residues 205–222 (GVQQGPVDQNVKESSVSA) show a composition bias toward polar residues. Residues 283-315 (MKTKELARHNQATQSQLEKLQEQVQLYATAMSS) adopt a coiled-coil conformation.

Its subcellular location is the nucleus. It is found in the cytoplasm. The protein resides in the cytosol. Functionally, transcriptional repressor which acts as a negative-feedback regulator of CLOCK-BMAL1 transcriptional activity in the circadian-clock mechanism. The physiological relevance of these observations is unsure. The polypeptide is CLOCK-interacting pacemaker (cipc) (Xenopus laevis (African clawed frog)).